The chain runs to 510 residues: Probable DNA ligase (510 aa).

Residue Glu-210 participates in ATP binding. Catalysis depends on Lys-212, which acts as the N6-AMP-lysine intermediate. Residues Arg-217, Arg-232, Glu-261, Phe-296, Arg-367, and Lys-373 each coordinate ATP.

This sequence belongs to the ATP-dependent DNA ligase family. Requires Mg(2+) as cofactor.

The catalysed reaction is ATP + (deoxyribonucleotide)n-3'-hydroxyl + 5'-phospho-(deoxyribonucleotide)m = (deoxyribonucleotide)n+m + AMP + diphosphate.. Functionally, DNA ligase that seals nicks in double-stranded DNA during DNA replication, DNA recombination and DNA repair. This is Probable DNA ligase from Saccharopolyspora erythraea (strain ATCC 11635 / DSM 40517 / JCM 4748 / NBRC 13426 / NCIMB 8594 / NRRL 2338).